A 139-amino-acid polypeptide reads, in one-letter code: Protein Turandot B (139 aa).

An N-terminal signal peptide occupies residues M1–A21.

It belongs to the Turandot family.

It localises to the secreted. Functionally, a humoral factor that may play a role in stress tolerance. The protein is Protein Turandot B of Drosophila simulans (Fruit fly).